The sequence spans 262 residues: Shikimate dehydrogenase (NADP(+)) (262 aa).

Shikimate is bound by residues 15–17 (SRS) and threonine 62. Lysine 66 acts as the Proton acceptor in catalysis. An NADP(+)-binding site is contributed by glutamate 78. The shikimate site is built by asparagine 87 and aspartate 102. NADP(+) contacts are provided by residues 126–130 (GAGGA), 150–155 (NRTLAR), and methionine 214. Shikimate is bound at residue tyrosine 216. NADP(+) is bound at residue glycine 236.

Belongs to the shikimate dehydrogenase family. As to quaternary structure, homodimer.

The catalysed reaction is shikimate + NADP(+) = 3-dehydroshikimate + NADPH + H(+). It participates in metabolic intermediate biosynthesis; chorismate biosynthesis; chorismate from D-erythrose 4-phosphate and phosphoenolpyruvate: step 4/7. Functionally, involved in the biosynthesis of the chorismate, which leads to the biosynthesis of aromatic amino acids. Catalyzes the reversible NADPH linked reduction of 3-dehydroshikimate (DHSA) to yield shikimate (SA). The chain is Shikimate dehydrogenase (NADP(+)) from Acinetobacter baumannii (strain AB307-0294).